Consider the following 220-residue polypeptide: NADH-quinone oxidoreductase subunit I (220 aa).

2 4Fe-4S ferredoxin-type domains span residues leucine 71–histidine 102 and aspartate 112–arginine 141. [4Fe-4S] cluster-binding residues include cysteine 82, cysteine 85, cysteine 88, cysteine 92, cysteine 121, cysteine 124, cysteine 127, and cysteine 131. The interval methionine 187–valine 220 is disordered. Over residues proline 198–valine 220 the composition is skewed to basic and acidic residues.

The protein belongs to the complex I 23 kDa subunit family. In terms of assembly, NDH-1 is composed of 14 different subunits. Subunits NuoA, H, J, K, L, M, N constitute the membrane sector of the complex. [4Fe-4S] cluster is required as a cofactor.

The protein resides in the cell inner membrane. It catalyses the reaction a quinone + NADH + 5 H(+)(in) = a quinol + NAD(+) + 4 H(+)(out). In terms of biological role, NDH-1 shuttles electrons from NADH, via FMN and iron-sulfur (Fe-S) centers, to quinones in the respiratory chain. The immediate electron acceptor for the enzyme in this species is believed to be ubiquinone. Couples the redox reaction to proton translocation (for every two electrons transferred, four hydrogen ions are translocated across the cytoplasmic membrane), and thus conserves the redox energy in a proton gradient. The protein is NADH-quinone oxidoreductase subunit I of Helicobacter pylori (strain G27).